The following is a 2281-amino-acid chain: Protein Ycf2 (2281 aa).

1635–1642 (GSIGSGRS) serves as a coordination point for ATP.

The protein belongs to the Ycf2 family.

Its subcellular location is the plastid. The protein resides in the chloroplast stroma. Functionally, probable ATPase of unknown function. Its presence in a non-photosynthetic plant (Epifagus virginiana) and experiments in tobacco indicate that it has an essential function which is probably not related to photosynthesis. The sequence is that of Protein Ycf2 from Coffea arabica (Arabian coffee).